We begin with the raw amino-acid sequence, 433 residues long: Gamma-glutamyl phosphate reductase (433 aa).

Belongs to the gamma-glutamyl phosphate reductase family.

It localises to the cytoplasm. The enzyme catalyses L-glutamate 5-semialdehyde + phosphate + NADP(+) = L-glutamyl 5-phosphate + NADPH + H(+). The protein operates within amino-acid biosynthesis; L-proline biosynthesis; L-glutamate 5-semialdehyde from L-glutamate: step 2/2. Functionally, catalyzes the NADPH-dependent reduction of L-glutamate 5-phosphate into L-glutamate 5-semialdehyde and phosphate. The product spontaneously undergoes cyclization to form 1-pyrroline-5-carboxylate. This is Gamma-glutamyl phosphate reductase from Rhodopseudomonas palustris (strain BisB18).